The chain runs to 124 residues: Small ribosomal subunit protein uS12 (124 aa).

D89 carries the post-translational modification 3-methylthioaspartic acid.

It belongs to the universal ribosomal protein uS12 family. In terms of assembly, part of the 30S ribosomal subunit. Contacts proteins S8 and S17. May interact with IF1 in the 30S initiation complex.

Its function is as follows. With S4 and S5 plays an important role in translational accuracy. Functionally, interacts with and stabilizes bases of the 16S rRNA that are involved in tRNA selection in the A site and with the mRNA backbone. Located at the interface of the 30S and 50S subunits, it traverses the body of the 30S subunit contacting proteins on the other side and probably holding the rRNA structure together. The combined cluster of proteins S8, S12 and S17 appears to hold together the shoulder and platform of the 30S subunit. This chain is Small ribosomal subunit protein uS12, found in Caldanaerobacter subterraneus subsp. tengcongensis (strain DSM 15242 / JCM 11007 / NBRC 100824 / MB4) (Thermoanaerobacter tengcongensis).